Here is a 246-residue protein sequence, read N- to C-terminus: Ribosomal RNA small subunit methyltransferase J (246 aa).

S-adenosyl-L-methionine contacts are provided by residues 115–116 (ER) and Asp169.

Belongs to the methyltransferase superfamily. RsmJ family.

Its subcellular location is the cytoplasm. It carries out the reaction guanosine(1516) in 16S rRNA + S-adenosyl-L-methionine = N(2)-methylguanosine(1516) in 16S rRNA + S-adenosyl-L-homocysteine + H(+). Specifically methylates the guanosine in position 1516 of 16S rRNA. The protein is Ribosomal RNA small subunit methyltransferase J of Buchnera aphidicola subsp. Acyrthosiphon pisum (strain Tuc7).